Consider the following 491-residue polypeptide: Ketol-acid reductoisomerase (NADP(+)) (491 aa).

The region spanning 15–208 is the KARI N-terminal Rossmann domain; sequence AQLGKCRFMG…GGHRAGVLES (194 aa). NADP(+) contacts are provided by residues 45–48, R68, R76, S78, and 108–110; these read CGAQ and DKQ. H132 is an active-site residue. An NADP(+)-binding site is contributed by G158. KARI C-terminal knotted domains lie at 209-344 and 345-484; these read SFVA…TAPQ and YEGK…MTDM. The Mg(2+) site is built by D217, E221, E389, and E393. S414 serves as a coordination point for substrate.

The protein belongs to the ketol-acid reductoisomerase family. Requires Mg(2+) as cofactor.

It carries out the reaction (2R)-2,3-dihydroxy-3-methylbutanoate + NADP(+) = (2S)-2-acetolactate + NADPH + H(+). The enzyme catalyses (2R,3R)-2,3-dihydroxy-3-methylpentanoate + NADP(+) = (S)-2-ethyl-2-hydroxy-3-oxobutanoate + NADPH + H(+). It participates in amino-acid biosynthesis; L-isoleucine biosynthesis; L-isoleucine from 2-oxobutanoate: step 2/4. It functions in the pathway amino-acid biosynthesis; L-valine biosynthesis; L-valine from pyruvate: step 2/4. Functionally, involved in the biosynthesis of branched-chain amino acids (BCAA). Catalyzes an alkyl-migration followed by a ketol-acid reduction of (S)-2-acetolactate (S2AL) to yield (R)-2,3-dihydroxy-isovalerate. In the isomerase reaction, S2AL is rearranged via a Mg-dependent methyl migration to produce 3-hydroxy-3-methyl-2-ketobutyrate (HMKB). In the reductase reaction, this 2-ketoacid undergoes a metal-dependent reduction by NADPH to yield (R)-2,3-dihydroxy-isovalerate. The sequence is that of Ketol-acid reductoisomerase (NADP(+)) from Shigella dysenteriae serotype 1 (strain Sd197).